Consider the following 54-residue polypeptide: ATP synthase F(0) complex subunit 8 (54 aa).

The helical transmembrane segment at 9-29 threads the bilayer; that stretch reads WFMILFFSWVIFLTIIPTKII. Positions 35-54 are disordered; it reads NDPTQVDAKEHKNDTWNWPW.

The protein belongs to the ATPase protein 8 family. As to quaternary structure, component of the ATP synthase complex composed at least of ATP5F1A/subunit alpha, ATP5F1B/subunit beta, ATP5MC1/subunit c (homooctomer), MT-ATP6/subunit a, MT-ATP8/subunit 8, ATP5ME/subunit e, ATP5MF/subunit f, ATP5MG/subunit g, ATP5MK/subunit k, ATP5MJ/subunit j, ATP5F1C/subunit gamma, ATP5F1D/subunit delta, ATP5F1E/subunit epsilon, ATP5PF/subunit F6, ATP5PB/subunit b, ATP5PD/subunit d, ATP5PO/subunit OSCP. ATP synthase complex consists of a soluble F(1) head domain (subunits alpha(3) and beta(3)) - the catalytic core - and a membrane F(0) domain - the membrane proton channel (subunits c, a, 8, e, f, g, k and j). These two domains are linked by a central stalk (subunits gamma, delta, and epsilon) rotating inside the F1 region and a stationary peripheral stalk (subunits F6, b, d, and OSCP).

It is found in the mitochondrion membrane. In terms of biological role, subunit 8, of the mitochondrial membrane ATP synthase complex (F(1)F(0) ATP synthase or Complex V) that produces ATP from ADP in the presence of a proton gradient across the membrane which is generated by electron transport complexes of the respiratory chain. ATP synthase complex consist of a soluble F(1) head domain - the catalytic core - and a membrane F(1) domain - the membrane proton channel. These two domains are linked by a central stalk rotating inside the F(1) region and a stationary peripheral stalk. During catalysis, ATP synthesis in the catalytic domain of F(1) is coupled via a rotary mechanism of the central stalk subunits to proton translocation. In vivo, can only synthesize ATP although its ATP hydrolase activity can be activated artificially in vitro. Part of the complex F(0) domain. The chain is ATP synthase F(0) complex subunit 8 from Danio rerio (Zebrafish).